The following is a 129-amino-acid chain: NADH-ubiquinone oxidoreductase chain 3 (129 aa).

Helical transmembrane passes span 4-24 (FYMY…WLLA), 48-68 (AAFS…DLEI), and 82-102 (GLYG…AFIL).

Belongs to the complex I subunit 3 family.

The protein localises to the mitochondrion membrane. It carries out the reaction a ubiquinone + NADH + 5 H(+)(in) = a ubiquinol + NAD(+) + 4 H(+)(out). Functionally, core subunit of the mitochondrial membrane respiratory chain NADH dehydrogenase (Complex I) that is believed to belong to the minimal assembly required for catalysis. Complex I functions in the transfer of electrons from NADH to the respiratory chain. The immediate electron acceptor for the enzyme is believed to be ubiquinone. This chain is NADH-ubiquinone oxidoreductase chain 3 (NAD3), found in Candida albicans (strain SC5314 / ATCC MYA-2876) (Yeast).